Here is a 134-residue protein sequence, read N- to C-terminus: Small ribosomal subunit protein uS12 (134 aa).

The interval 1 to 26 (MPTTQQLLRKGRTTLQKKSKVPALKG) is disordered. Positions 9 to 20 (RKGRTTLQKKSK) are enriched in basic residues. At Asp-89 the chain carries 3-methylthioaspartic acid. Residues 103–134 (DTQGVKDRNKSRSKYGTKKPKAGAAAAGAKKK) form a disordered region. A compositionally biased stretch (basic residues) spans 113 to 123 (SRSKYGTKKPK). Low complexity predominate over residues 124-134 (AGAAAAGAKKK).

Belongs to the universal ribosomal protein uS12 family. Part of the 30S ribosomal subunit. Contacts proteins S8 and S17. May interact with IF1 in the 30S initiation complex.

Functionally, with S4 and S5 plays an important role in translational accuracy. Interacts with and stabilizes bases of the 16S rRNA that are involved in tRNA selection in the A site and with the mRNA backbone. Located at the interface of the 30S and 50S subunits, it traverses the body of the 30S subunit contacting proteins on the other side and probably holding the rRNA structure together. The combined cluster of proteins S8, S12 and S17 appears to hold together the shoulder and platform of the 30S subunit. The polypeptide is Small ribosomal subunit protein uS12 (Deinococcus geothermalis (strain DSM 11300 / CIP 105573 / AG-3a)).